The chain runs to 800 residues: MLISNEWLKEYVTIDDSVSNLAERITRTGIEVDDLIDYTKDIKNLVVGFVKSKDKHPDADKLNVCQVDIGEDEPVQIVCGAPNVDAGQYVIVAKVGGRLPGGIKIKRAKLRGERSEGMICSLQEIGISSNYIPKSFESGIYVFSESQVPGTDALQALYLDDQVMEFDLTPNRADALSMIGTAYEVAALYNTKMTKPDTTSNELELSANDELTVTIENEDKVPYYSARVVHDVTIEPSPIWMQARLIKAGIRPINNVVDISNYVLLEYGQPLHMFDQDAIGSQQIVVRQANEGEKMTTLDDTERELLTSDIVITNGQTPIALAGVMGGDFSEVKEQTSNIVIEGAIFDPVSIRHTSRRLNLRSESSSRFEKGIATEFVDEAVDRACYLLQTYANGKVLKDRVSSGELGAFITPIDITADKINRTIGFDLSQNDIVTIFNQLGFDTEINDDVITVLVPSRRKDITIKEDLIEEVARIYGYDDIPSTLPVFDKVTSGQLTDRQYKTRMVKEVLEGAGLDQAITYSLVSKEDATAFSMQQRQTIDLLMPMSEAHASLRQSLLPHLIEAASYNVARKNKDVKLFEIGNVFFANGEGELPDQVEYLSGILTGDYVVNQWQGKKETVDFYLAKGVVDRVSEKLNLEFSYRRADIDGLHPGRTAEILLENKVVGFIGELHPTLAADNDLKRTYVFELNFDALMSVSVGYINYQPIPRFPGMSRDIALEVDQNIPAADLLSTIHAHGGNILKDTLVFDVYQGEHLEKGKKSIAIRLNYLDTEETLTDERVSKVQAEIEAALIEQGAVIR.

Positions 39-154 constitute a tRNA-binding domain; the sequence is TKDIKNLVVG…ESQVPGTDAL (116 aa). The region spanning 408–483 is the B5 domain; that stretch reads AFITPIDITA…RIYGYDDIPS (76 aa). Mg(2+) contacts are provided by D461, D467, E470, and E471. One can recognise an FDX-ACB domain in the interval 708–800; that stretch reads PRFPGMSRDI…ALIEQGAVIR (93 aa).

The protein belongs to the phenylalanyl-tRNA synthetase beta subunit family. Type 1 subfamily. Tetramer of two alpha and two beta subunits. It depends on Mg(2+) as a cofactor.

The protein localises to the cytoplasm. The catalysed reaction is tRNA(Phe) + L-phenylalanine + ATP = L-phenylalanyl-tRNA(Phe) + AMP + diphosphate + H(+). In Staphylococcus aureus (strain MSSA476), this protein is Phenylalanine--tRNA ligase beta subunit.